We begin with the raw amino-acid sequence, 177 residues long: Glutathione peroxidase homolog (177 aa).

Residue Cys-35 is part of the active site.

Belongs to the glutathione peroxidase family.

Its function is as follows. Important in the cellular metabolism or defense processes particular to this pathogen. This chain is Glutathione peroxidase homolog (gpxA), found in Neisseria meningitidis serogroup A / serotype 4A (strain DSM 15465 / Z2491).